We begin with the raw amino-acid sequence, 173 residues long: Adenine phosphoribosyltransferase (173 aa).

It belongs to the purine/pyrimidine phosphoribosyltransferase family. In terms of assembly, homodimer.

It is found in the cytoplasm. The catalysed reaction is AMP + diphosphate = 5-phospho-alpha-D-ribose 1-diphosphate + adenine. It participates in purine metabolism; AMP biosynthesis via salvage pathway; AMP from adenine: step 1/1. Its function is as follows. Catalyzes a salvage reaction resulting in the formation of AMP, that is energically less costly than de novo synthesis. The protein is Adenine phosphoribosyltransferase of Listeria monocytogenes serotype 4b (strain CLIP80459).